Here is a 342-residue protein sequence, read N- to C-terminus: tRNA N6-adenosine threonylcarbamoyltransferase (342 aa).

Residues H120 and H124 each contribute to the Fe cation site. Residues 142 to 146 (VVSGG), D175, G188, D192, and N281 each bind substrate. A Fe cation-binding site is contributed by D310.

Belongs to the KAE1 / TsaD family. Fe(2+) serves as cofactor.

The protein resides in the cytoplasm. It catalyses the reaction L-threonylcarbamoyladenylate + adenosine(37) in tRNA = N(6)-L-threonylcarbamoyladenosine(37) in tRNA + AMP + H(+). Its function is as follows. Required for the formation of a threonylcarbamoyl group on adenosine at position 37 (t(6)A37) in tRNAs that read codons beginning with adenine. Is involved in the transfer of the threonylcarbamoyl moiety of threonylcarbamoyl-AMP (TC-AMP) to the N6 group of A37, together with TsaE and TsaB. TsaD likely plays a direct catalytic role in this reaction. This Geobacillus thermodenitrificans (strain NG80-2) protein is tRNA N6-adenosine threonylcarbamoyltransferase.